We begin with the raw amino-acid sequence, 1224 residues long: ATP-dependent helicase/nuclease subunit A (1224 aa).

Residues 15-480 (VIWTDAQWQS…IDLSQNFRSR (466 aa)) form the UvrD-like helicase ATP-binding domain. 36-43 (AAAGSGKT) provides a ligand contact to ATP. Positions 497 to 791 (EQVGEISYDD…RMMTIHSSKG (295 aa)) constitute a UvrD-like helicase C-terminal domain.

Belongs to the helicase family. AddA subfamily. As to quaternary structure, heterodimer of AddA and AddB/RexB. Mg(2+) serves as cofactor.

The enzyme catalyses Couples ATP hydrolysis with the unwinding of duplex DNA by translocating in the 3'-5' direction.. It catalyses the reaction ATP + H2O = ADP + phosphate + H(+). The heterodimer acts as both an ATP-dependent DNA helicase and an ATP-dependent, dual-direction single-stranded exonuclease. Recognizes the chi site generating a DNA molecule suitable for the initiation of homologous recombination. The AddA nuclease domain is required for chi fragment generation; this subunit has the helicase and 3' -&gt; 5' nuclease activities. The polypeptide is ATP-dependent helicase/nuclease subunit A (Staphylococcus epidermidis (strain ATCC 12228 / FDA PCI 1200)).